The chain runs to 203 residues: MSGRSVRAETRSRAKDDIKKVMAAIERVRRWEKKWVTVGDTSLRIFKWVPVVDTKEKEKSKVSVGGEMQRKNFPSEESSDNACSVLLDFQDENSNQSSLSDSYQHKAAADSSNNSSPPASEPVSPAPQSLDYRTDDPQPPTLGQEIMEEPLLQSSEIADEPPTLIKEDLLPLTAQEDEDSCGAPPLKRICTEQVSVIQMVPLS.

2 disordered regions span residues 55–80 (KEKEKSKVSVGGEMQRKNFPSEESSD) and 94–148 (SNQS…EIME). Over residues 109-129 (ADSSNNSSPPASEPVSPAPQS) the composition is skewed to low complexity.

Belongs to the BCL7 family.

This chain is B-cell CLL/lymphoma 7 protein family member B-A (bcl7ba), found in Danio rerio (Zebrafish).